We begin with the raw amino-acid sequence, 479 residues long: Transcription factor CP2-like protein 1 (479 aa).

The segment at 1-52 (MLFWHTQPEHYNQHNSGSYLRDVLALPIFKQEEPQLSPENGARLPPLQYVLC) is mediate transcriptional repression. The Grh/CP2 DB domain maps to 43–280 (RLPPLQYVLC…PSPSYNGSPN (238 aa)). Disordered regions lie at residues 219–248 (KPKG…YQPS) and 260–301 (WPDV…LPLG). Over residues 221-245 (KGADRKQKTDREKMEKRTAQEKEKY) the composition is skewed to basic and acidic residues. Residues 261–365 (PDVPYQANNT…IRLFNAIKGR (105 aa)) are SAM2-like domain. Positions 266-292 (QANNTPSPSYNGSPNSFGLREGNSSPN) are enriched in polar residues.

Belongs to the grh/CP2 family. CP2 subfamily. Forms homohexamers via its SAM-like domain. Interacts with Mta1; which is indispensable for Tfcp2l1-mediated self-renewal-promoting effect and endoderm-inhibiting action. As to expression, highly expressed in placenta, testis, small intestine, kidney and stomach. Low levels of expression in lung, mesenteric lymph nodes, muscle, ovary, and thymus. No expression was detected in brain, heart, liver, and spleen. Expressed in eccrine glands in the palm. Expression is prominent in both kidney collecting ducts intercalated (IC) and principal (PC) cells. Also expressed in the thick limb of Henle and connecting segments of the nephron.

The protein resides in the nucleus. In terms of biological role, transcription factor that facilitates establishment and maintenance of pluripotency in embryonic stem cells (ESCs). With Klf2, acts as the major effector of self-renewal that mediates induction of pluripotency downstream of LIF/Stat3 and Wnt/beta-catenin signaling. Required for normal duct development in the salivary gland and kidney. Coordinates the development of the kidney collecting ducts intercalated (IC) and principal (PC) cells, which regulate acid-base and salt-water homeostasis, respectively. Regulates the expression of IC genes including subunits B1 and D2 of the V-ATPase complex, Oxgr1, Ca12, Slc4a1, Aqp6 and IC-specific transcription factor Foxi1. Also regulates the expression of Jag1 and subsequent notch signaling in the collecting duct. Jag1 initiates notch signaling in PCs but inhibits notch signaling in ICs. Acts as a transcriptional suppressor that may suppress UBP1-mediated transcriptional activation. Modulates the placental expression of CYP11A1. The protein is Transcription factor CP2-like protein 1 (Tfcp2l1) of Mus musculus (Mouse).